A 469-amino-acid polypeptide reads, in one-letter code: Glutamate-1-semialdehyde 2,1-aminomutase, chloroplastic (469 aa).

Residues 1–34 constitute a chloroplast transit peptide; the sequence is MAGAAAAVASGISIRPVAAPKISRAPRSRSVVRA. Position 309 is an N6-(pyridoxal phosphate)lysine (Lys309).

This sequence belongs to the class-III pyridoxal-phosphate-dependent aminotransferase family. HemL subfamily. As to quaternary structure, homodimer. It depends on pyridoxal 5'-phosphate as a cofactor.

Its subcellular location is the plastid. It localises to the chloroplast. The enzyme catalyses (S)-4-amino-5-oxopentanoate = 5-aminolevulinate. The protein operates within porphyrin-containing compound metabolism; protoporphyrin-IX biosynthesis; 5-aminolevulinate from L-glutamyl-tRNA(Glu): step 2/2. It functions in the pathway porphyrin-containing compound metabolism; chlorophyll biosynthesis. The sequence is that of Glutamate-1-semialdehyde 2,1-aminomutase, chloroplastic (GSA) from Hordeum vulgare (Barley).